The sequence spans 170 residues: Shikimate kinase (170 aa).

ATP is bound at residue 11–16 (LSGKST). Serine 15 serves as a coordination point for Mg(2+). 3 residues coordinate substrate: aspartate 33, arginine 57, and glycine 79. Position 119 (arginine 119) interacts with ATP. Arginine 137 lines the substrate pocket.

Belongs to the shikimate kinase family. Monomer. The cofactor is Mg(2+).

It is found in the cytoplasm. The catalysed reaction is shikimate + ATP = 3-phosphoshikimate + ADP + H(+). It participates in metabolic intermediate biosynthesis; chorismate biosynthesis; chorismate from D-erythrose 4-phosphate and phosphoenolpyruvate: step 5/7. Catalyzes the specific phosphorylation of the 3-hydroxyl group of shikimic acid using ATP as a cosubstrate. The sequence is that of Shikimate kinase from Clostridium botulinum (strain Loch Maree / Type A3).